The primary structure comprises 293 residues: Formamidopyrimidine-DNA glycosylase (293 aa).

Pro-2 functions as the Schiff-base intermediate with DNA in the catalytic mechanism. Residue Glu-3 is the Proton donor of the active site. The active-site Proton donor; for beta-elimination activity is the Lys-60. His-110, Arg-129, and Lys-174 together coordinate DNA. Residues 259–293 form an FPG-type zinc finger; it reads NVYRRTGKKCHACKNLIERQKISGRSTHWCRKCQK. Arg-283 (proton donor; for delta-elimination activity) is an active-site residue.

This sequence belongs to the FPG family. In terms of assembly, monomer. The cofactor is Zn(2+).

The enzyme catalyses Hydrolysis of DNA containing ring-opened 7-methylguanine residues, releasing 2,6-diamino-4-hydroxy-5-(N-methyl)formamidopyrimidine.. It catalyses the reaction 2'-deoxyribonucleotide-(2'-deoxyribose 5'-phosphate)-2'-deoxyribonucleotide-DNA = a 3'-end 2'-deoxyribonucleotide-(2,3-dehydro-2,3-deoxyribose 5'-phosphate)-DNA + a 5'-end 5'-phospho-2'-deoxyribonucleoside-DNA + H(+). Involved in base excision repair of DNA damaged by oxidation or by mutagenic agents. Acts as a DNA glycosylase that recognizes and removes damaged bases. Has a preference for oxidized purines, such as 7,8-dihydro-8-oxoguanine (8-oxoG). Has AP (apurinic/apyrimidinic) lyase activity and introduces nicks in the DNA strand. Cleaves the DNA backbone by beta-delta elimination to generate a single-strand break at the site of the removed base with both 3'- and 5'-phosphates. This chain is Formamidopyrimidine-DNA glycosylase, found in Prochlorococcus marinus (strain MIT 9515).